Reading from the N-terminus, the 107-residue chain is Phosphoribosyl-ATP pyrophosphatase (107 aa).

The protein belongs to the PRA-PH family.

Its subcellular location is the cytoplasm. The catalysed reaction is 1-(5-phospho-beta-D-ribosyl)-ATP + H2O = 1-(5-phospho-beta-D-ribosyl)-5'-AMP + diphosphate + H(+). It functions in the pathway amino-acid biosynthesis; L-histidine biosynthesis; L-histidine from 5-phospho-alpha-D-ribose 1-diphosphate: step 2/9. The chain is Phosphoribosyl-ATP pyrophosphatase from Brucella abortus (strain S19).